Consider the following 333-residue polypeptide: Holliday junction branch migration complex subunit RuvB (333 aa).

The segment at 1 to 181 is large ATPase domain (RuvB-L); it reads MNDILNKEPM…FGISSHMEYY (181 aa). ATP is bound by residues Leu-20, Arg-21, Gly-62, Lys-65, Thr-66, Thr-67, 128–130, Arg-171, Tyr-181, and Arg-218; that span reads EDF. Thr-66 contributes to the Mg(2+) binding site. A small ATPAse domain (RuvB-S) region spans residues 182-252; sequence QERDLEEIVK…ITDKALTILD (71 aa). The interval 255-333 is head domain (RuvB-H); sequence AAGLDYIDQK…HLGYVYNEEE (79 aa). Residues Arg-291, Arg-310, and Arg-315 each coordinate DNA.

Belongs to the RuvB family. In terms of assembly, homohexamer. Forms an RuvA(8)-RuvB(12)-Holliday junction (HJ) complex. HJ DNA is sandwiched between 2 RuvA tetramers; dsDNA enters through RuvA and exits via RuvB. An RuvB hexamer assembles on each DNA strand where it exits the tetramer. Each RuvB hexamer is contacted by two RuvA subunits (via domain III) on 2 adjacent RuvB subunits; this complex drives branch migration. In the full resolvosome a probable DNA-RuvA(4)-RuvB(12)-RuvC(2) complex forms which resolves the HJ.

Its subcellular location is the cytoplasm. It catalyses the reaction ATP + H2O = ADP + phosphate + H(+). Functionally, the RuvA-RuvB-RuvC complex processes Holliday junction (HJ) DNA during genetic recombination and DNA repair, while the RuvA-RuvB complex plays an important role in the rescue of blocked DNA replication forks via replication fork reversal (RFR). RuvA specifically binds to HJ cruciform DNA, conferring on it an open structure. The RuvB hexamer acts as an ATP-dependent pump, pulling dsDNA into and through the RuvAB complex. RuvB forms 2 homohexamers on either side of HJ DNA bound by 1 or 2 RuvA tetramers; 4 subunits per hexamer contact DNA at a time. Coordinated motions by a converter formed by DNA-disengaged RuvB subunits stimulates ATP hydrolysis and nucleotide exchange. Immobilization of the converter enables RuvB to convert the ATP-contained energy into a lever motion, pulling 2 nucleotides of DNA out of the RuvA tetramer per ATP hydrolyzed, thus driving DNA branch migration. The RuvB motors rotate together with the DNA substrate, which together with the progressing nucleotide cycle form the mechanistic basis for DNA recombination by continuous HJ branch migration. Branch migration allows RuvC to scan DNA until it finds its consensus sequence, where it cleaves and resolves cruciform DNA. In Lactococcus lactis subsp. cremoris (strain SK11), this protein is Holliday junction branch migration complex subunit RuvB.